The sequence spans 407 residues: Phosphopentomutase (407 aa).

6 residues coordinate Mn(2+): D11, D305, H310, D346, H347, and H358.

The protein belongs to the phosphopentomutase family. Mn(2+) serves as cofactor.

The protein localises to the cytoplasm. It carries out the reaction 2-deoxy-alpha-D-ribose 1-phosphate = 2-deoxy-D-ribose 5-phosphate. The enzyme catalyses alpha-D-ribose 1-phosphate = D-ribose 5-phosphate. Its pathway is carbohydrate degradation; 2-deoxy-D-ribose 1-phosphate degradation; D-glyceraldehyde 3-phosphate and acetaldehyde from 2-deoxy-alpha-D-ribose 1-phosphate: step 1/2. In terms of biological role, isomerase that catalyzes the conversion of deoxy-ribose 1-phosphate (dRib-1-P) and ribose 1-phosphate (Rib-1-P) to deoxy-ribose 5-phosphate (dRib-5-P) and ribose 5-phosphate (Rib-5-P), respectively. The sequence is that of Phosphopentomutase from Legionella pneumophila subsp. pneumophila (strain Philadelphia 1 / ATCC 33152 / DSM 7513).